A 632-amino-acid polypeptide reads, in one-letter code: Probable electron transfer flavoprotein-ubiquinone oxidoreductase, mitochondrial (632 aa).

Residue 93 to 107 (VCIVGAGPAGLSAAI) coordinates FAD. [4Fe-4S] cluster contacts are provided by cysteine 575, cysteine 601, cysteine 604, and cysteine 607. In terms of domain architecture, 4Fe-4S ferredoxin-type spans 592–621 (KRFVINSQNCVHCKTCDIKDPLQGIQWKTP).

It belongs to the ETF-QO/FixC family. Requires [4Fe-4S] cluster as cofactor. The cofactor is FAD.

The protein resides in the mitochondrion inner membrane. It carries out the reaction a ubiquinone + reduced [electron-transfer flavoprotein] = a ubiquinol + oxidized [electron-transfer flavoprotein] + H(+). In terms of biological role, accepts electrons from ETF and reduces ubiquinone. This chain is Probable electron transfer flavoprotein-ubiquinone oxidoreductase, mitochondrial, found in Schizosaccharomyces pombe (strain 972 / ATCC 24843) (Fission yeast).